A 103-amino-acid chain; its full sequence is Defensin-like protein 289 (103 aa).

Residues 1–29 form the signal peptide; the sequence is MATLKTTIFIIFILYISCTMFVNIFRVQA. Disulfide bonds link cysteine 33–cysteine 50, cysteine 39–cysteine 55, cysteine 43–cysteine 57, cysteine 72–cysteine 92, cysteine 78–cysteine 98, and cysteine 84–cysteine 100.

This sequence belongs to the DEFL family.

It localises to the secreted. The chain is Defensin-like protein 289 from Arabidopsis thaliana (Mouse-ear cress).